The chain runs to 688 residues: Small ribosomal subunit protein mS39 (688 aa).

Residues 1 to 37 (MASVASARWLRVSCGLCVPLTARRAGPCGRTPSSRFY) constitute a mitochondrion transit peptide. The residue at position 126 (K126) is an N6-acetyllysine. PPR repeat units lie at residues 149-183 (IEEISEAALQERIKLKKVKASVDIFDQLLQAGTTV), 184-219 (SLETTNSLLDLLCYYGNQEPSTNYNFQQHEQTEELE), 258-292 (NAHSYCTMIRGMVKHRAHTQALSMYTELLNNRLRA), 293-333 (DVHT…NVKP), 334-370 (NLQTFNTILKCLRRFYAFGKLPALQTFREMKAIGIEP), 371-412 (SLAT…SPKD), 415-449 (DDMFFQSAMRVCSSLRDLELAYQVHGLLNTGDNRK), 457-491 (RNFYYSKFFSLLCLMEQIDVTLKWYKDLIPSVFFP), 492-526 (HSQTLIDLLQALDVANRLEMIPQIWKDSKEYGHTF), and 575-609 (PANSLNYIAILFLRAGRTQEAWKMLGLFRKHNKIP). Positions 667–688 (GDLTALTSDSESDSDSDTSKDK) are disordered.

This sequence belongs to the mitochondrion-specific ribosomal protein mS39 family. Component of the mitochondrial ribosome small subunit (28S) which comprises a 12S rRNA and about 30 distinct proteins. Associated with the 12S mitochondrial rRNA (12S mt-rRNA).

It is found in the mitochondrion. Functionally, mitochondrial RNA-binding protein that has a role in mitochondrial translation. This Bos taurus (Bovine) protein is Small ribosomal subunit protein mS39 (PTCD3).